The chain runs to 431 residues: 3-phosphoshikimate 1-carboxyvinyltransferase (431 aa).

Lysine 21, serine 22, and arginine 26 together coordinate 3-phosphoshikimate. Position 21 (lysine 21) interacts with phosphoenolpyruvate. 2 residues coordinate phosphoenolpyruvate: glycine 93 and arginine 121. The 3-phosphoshikimate site is built by serine 166, glutamine 168, aspartate 318, and lysine 345. Glutamine 168 is a binding site for phosphoenolpyruvate. Residue aspartate 318 is the Proton acceptor of the active site. Positions 349 and 391 each coordinate phosphoenolpyruvate.

Belongs to the EPSP synthase family. As to quaternary structure, monomer.

It is found in the cytoplasm. The catalysed reaction is 3-phosphoshikimate + phosphoenolpyruvate = 5-O-(1-carboxyvinyl)-3-phosphoshikimate + phosphate. Its pathway is metabolic intermediate biosynthesis; chorismate biosynthesis; chorismate from D-erythrose 4-phosphate and phosphoenolpyruvate: step 6/7. Functionally, catalyzes the transfer of the enolpyruvyl moiety of phosphoenolpyruvate (PEP) to the 5-hydroxyl of shikimate-3-phosphate (S3P) to produce enolpyruvyl shikimate-3-phosphate and inorganic phosphate. This is 3-phosphoshikimate 1-carboxyvinyltransferase from Sulfurihydrogenibium sp. (strain YO3AOP1).